A 141-amino-acid polypeptide reads, in one-letter code: ATP synthase epsilon chain (141 aa).

The protein belongs to the ATPase epsilon chain family. In terms of assembly, F-type ATPases have 2 components, CF(1) - the catalytic core - and CF(0) - the membrane proton channel. CF(1) has five subunits: alpha(3), beta(3), gamma(1), delta(1), epsilon(1). CF(0) has three main subunits: a, b and c.

The protein localises to the cell inner membrane. Its function is as follows. Produces ATP from ADP in the presence of a proton gradient across the membrane. This chain is ATP synthase epsilon chain, found in Pseudomonas fluorescens (strain Pf0-1).